Reading from the N-terminus, the 303-residue chain is Probable meiosis-specific protein SPO11 homolog (303 aa).

Residues 1 to 96 form the Topo IIA-type catalytic domain; sequence MALAPTSSAI…LGVRNTLKGI (96 aa). Tyrosine 57 acts as the O-(5'-phospho-DNA)-tyrosine intermediate in catalysis. Residues glutamate 144 and aspartate 196 each contribute to the Mg(2+) site.

This sequence belongs to the TOP6A family. It depends on Mg(2+) as a cofactor.

It localises to the nucleus. The catalysed reaction is ATP-dependent breakage, passage and rejoining of double-stranded DNA.. Its function is as follows. Required for meiotic recombination. Mediates DNA cleavage that forms the double-strand breaks (DSB) that initiate meiotic recombination. This Encephalitozoon cuniculi (strain GB-M1) (Microsporidian parasite) protein is Probable meiosis-specific protein SPO11 homolog (SPO11).